The chain runs to 1111 residues: Receptor-type guanylate cyclase gcy-14 (1111 aa).

Residues 1–14 (MCLFLLLFPYLASG) form the signal peptide. Residues 15–473 (QFLQTVKVGL…ECPPDFVKEY (459 aa)) are Extracellular-facing. Asparagine 65, asparagine 130, asparagine 318, asparagine 340, asparagine 365, and asparagine 379 each carry an N-linked (GlcNAc...) asparagine glycan. The chain crosses the membrane as a helical span at residues 474–494 (LVYTIIAAVIVVLALLAGCAG). The 336-residue stretch at 482 to 817 (VIVVLALLAG…KSNLMDHVFN (336 aa)) folds into the Protein kinase domain. ATP contacts are provided by residues 488–496 (LLAGCAGLL) and lysine 545. At 495–1111 (LLYTMQMKRK…DFNNGNECVS (617 aa)) the chain is on the cytoplasmic side. In terms of domain architecture, Guanylate cyclase spans 875–1005 (TIFFSDVVQF…DAVNTASRME (131 aa)). The tract at residues 1061 to 1082 (SAQAPREKTPEPPRRQSVRSIS) is disordered. Residues 1065–1074 (PREKTPEPPR) show a composition bias toward basic and acidic residues.

The protein belongs to the adenylyl cyclase class-4/guanylyl cyclase family. In terms of assembly, homodimer. As to expression, expressed asymmetrically in ASEL sensory neuron.

It is found in the cell membrane. The protein localises to the cell projection. Its subcellular location is the cilium. The catalysed reaction is GTP = 3',5'-cyclic GMP + diphosphate. Guanylate cyclase involved in the production of the second messenger cGMP. Regulates chemotaxis responses toward Na(1+) and Li(1+) salt ions and alkaline pH in ASE left (ASEL) sensory neuron. Directly senses environmental alkalinity in ASEL neuron which probably leads to the activation of cGMP-gated cation channel tax2/tax4. In Caenorhabditis elegans, this protein is Receptor-type guanylate cyclase gcy-14.